A 365-amino-acid chain; its full sequence is Histidinol-phosphate aminotransferase (365 aa).

The segment at 1 to 23 (MSRPVPNPGILDIAPYTPGKSPV) is disordered. An N6-(pyridoxal phosphate)lysine modification is found at lysine 221.

Belongs to the class-II pyridoxal-phosphate-dependent aminotransferase family. Histidinol-phosphate aminotransferase subfamily. In terms of assembly, homodimer. Requires pyridoxal 5'-phosphate as cofactor.

The enzyme catalyses L-histidinol phosphate + 2-oxoglutarate = 3-(imidazol-4-yl)-2-oxopropyl phosphate + L-glutamate. It participates in amino-acid biosynthesis; L-histidine biosynthesis; L-histidine from 5-phospho-alpha-D-ribose 1-diphosphate: step 7/9. The sequence is that of Histidinol-phosphate aminotransferase from Rhodopseudomonas palustris (strain BisB18).